A 331-amino-acid chain; its full sequence is 6-phosphogluconolactonase (331 aa).

The protein belongs to the cycloisomerase 2 family.

It catalyses the reaction 6-phospho-D-glucono-1,5-lactone + H2O = 6-phospho-D-gluconate + H(+). The protein operates within carbohydrate degradation; pentose phosphate pathway; D-ribulose 5-phosphate from D-glucose 6-phosphate (oxidative stage): step 2/3. Catalyzes the hydrolysis of 6-phosphogluconolactone to 6-phosphogluconate. The chain is 6-phosphogluconolactonase from Salmonella gallinarum (strain 287/91 / NCTC 13346).